Reading from the N-terminus, the 326-residue chain is Peroxidase 3 (326 aa).

The N-terminal stretch at 1–24 (MNCLIAIALSVSFFLVGIVGPIQA) is a signal peptide. Disulfide bonds link cysteine 35–cysteine 113, cysteine 68–cysteine 73, cysteine 119–cysteine 321, and cysteine 198–cysteine 231. Residue histidine 66 is the Proton acceptor of the active site. Ca(2+)-binding residues include aspartate 67, valine 70, glycine 72, aspartate 74, and serine 76. N-linked (GlcNAc...) asparagine glycosylation is found at asparagine 80 and asparagine 138. A substrate-binding site is contributed by proline 161. A glycan (N-linked (GlcNAc...) asparagine) is linked at asparagine 166. Histidine 191 serves as a coordination point for heme b. Threonine 192 contacts Ca(2+). N-linked (GlcNAc...) asparagine glycosylation is found at asparagine 207 and asparagine 237. Ca(2+) is bound by residues aspartate 244, serine 247, and aspartate 252.

Belongs to the peroxidase family. Classical plant (class III) peroxidase subfamily. The cofactor is heme b. Requires Ca(2+) as cofactor. As to expression, expressed in root cells.

The protein resides in the secreted. It catalyses the reaction 2 a phenolic donor + H2O2 = 2 a phenolic radical donor + 2 H2O. Functionally, removal of H(2)O(2), oxidation of toxic reductants, biosynthesis and degradation of lignin, suberization, auxin catabolism, response to environmental stresses such as wounding, pathogen attack and oxidative stress. These functions might be dependent on each isozyme/isoform in each plant tissue. This is Peroxidase 3 (PER3) from Arabidopsis thaliana (Mouse-ear cress).